A 161-amino-acid chain; its full sequence is Cyclic pyranopterin monophosphate synthase (161 aa).

Residues 75-77 (LCH) and 113-114 (ME) each bind substrate. Asp-128 is a catalytic residue.

This sequence belongs to the MoaC family. In terms of assembly, homohexamer; trimer of dimers.

The enzyme catalyses (8S)-3',8-cyclo-7,8-dihydroguanosine 5'-triphosphate = cyclic pyranopterin phosphate + diphosphate. The protein operates within cofactor biosynthesis; molybdopterin biosynthesis. In terms of biological role, catalyzes the conversion of (8S)-3',8-cyclo-7,8-dihydroguanosine 5'-triphosphate to cyclic pyranopterin monophosphate (cPMP). The protein is Cyclic pyranopterin monophosphate synthase of Citrobacter koseri (strain ATCC BAA-895 / CDC 4225-83 / SGSC4696).